Here is a 271-residue protein sequence, read N- to C-terminus: Type III pantothenate kinase (271 aa).

Residue 5–12 (DISNSVTK) participates in ATP binding. Residues Tyr-85 and 92–95 (GADR) each bind substrate. The Proton acceptor role is filled by Asp-94. Asp-114 is a K(+) binding site. Position 117 (Thr-117) interacts with ATP. Thr-169 contributes to the substrate binding site.

It belongs to the type III pantothenate kinase family. As to quaternary structure, homodimer. NH4(+) is required as a cofactor. K(+) serves as cofactor.

The protein resides in the cytoplasm. It catalyses the reaction (R)-pantothenate + ATP = (R)-4'-phosphopantothenate + ADP + H(+). The protein operates within cofactor biosynthesis; coenzyme A biosynthesis; CoA from (R)-pantothenate: step 1/5. Catalyzes the phosphorylation of pantothenate (Pan), the first step in CoA biosynthesis. This Methylacidiphilum infernorum (isolate V4) (Methylokorus infernorum (strain V4)) protein is Type III pantothenate kinase.